Here is a 94-residue protein sequence, read N- to C-terminus: Progonadoliberin-3 (94 aa).

Positions 1 to 23 are cleaved as a signal peptide; sequence MEGKGRVLVQLLMLACVLEVSLC. At Gln24 the chain carries Pyrrolidone carboxylic acid. Gly33 carries the glycine amide modification.

Belongs to the GnRH family.

It is found in the secreted. Stimulates the secretion of gonadotropins. This is Progonadoliberin-3 (gnrh3) from Carassius auratus (Goldfish).